Consider the following 137-residue polypeptide: uncharacterized protein (137 aa).

Positions 4 to 73 constitute an HTH merR-type domain; it reads MLTVSEVARK…LEEIADILHL (70 aa). The H-T-H motif DNA-binding region spans 8–27; that stretch reads SEVARKLGLNPQTLYFYERI.

This is an uncharacterized protein from Synechocystis sp. (strain ATCC 27184 / PCC 6803 / Kazusa).